The chain runs to 70 residues: Exodeoxyribonuclease 7 small subunit (70 aa).

The protein belongs to the XseB family. In terms of assembly, heterooligomer composed of large and small subunits.

It is found in the cytoplasm. The enzyme catalyses Exonucleolytic cleavage in either 5'- to 3'- or 3'- to 5'-direction to yield nucleoside 5'-phosphates.. In terms of biological role, bidirectionally degrades single-stranded DNA into large acid-insoluble oligonucleotides, which are then degraded further into small acid-soluble oligonucleotides. This Streptococcus pneumoniae serotype 2 (strain D39 / NCTC 7466) protein is Exodeoxyribonuclease 7 small subunit.